The primary structure comprises 135 residues: ATP synthase epsilon chain (135 aa).

Belongs to the ATPase epsilon chain family. As to quaternary structure, F-type ATPases have 2 components, CF(1) - the catalytic core - and CF(0) - the membrane proton channel. CF(1) has five subunits: alpha(3), beta(3), gamma(1), delta(1), epsilon(1). CF(0) has three main subunits: a, b and c.

It is found in the cell inner membrane. In terms of biological role, produces ATP from ADP in the presence of a proton gradient across the membrane. This chain is ATP synthase epsilon chain, found in Rhodopseudomonas palustris (strain BisB18).